Here is a 99-residue protein sequence, read N- to C-terminus: Nucleoid-associated protein str1598 (99 aa).

The protein belongs to the YbaB/EbfC family. Homodimer.

It localises to the cytoplasm. The protein resides in the nucleoid. Binds to DNA and alters its conformation. May be involved in regulation of gene expression, nucleoid organization and DNA protection. This Streptococcus thermophilus (strain CNRZ 1066) protein is Nucleoid-associated protein str1598.